The chain runs to 161 residues: V-type proton ATPase 16 kDa proteolipid subunit c 2 (161 aa).

Topologically, residues 1–15 (MSYDLETAERAAYAP) are lumenal. Residues 16 to 36 (FFGYMGAASAQIFTVLGAAYG) traverse the membrane as a helical segment. The Cytoplasmic portion of the chain corresponds to 37–58 (TAKSAVGICSMGVMRPELIMKS). A helical membrane pass occupies residues 59–79 (VIPVIMAGIIGIYGLVVAMVL). The Lumenal segment spans residues 80 to 98 (KGKVTSASAGYDLNKGFAH). The chain crosses the membrane as a helical span at residues 99 to 119 (LAAGLTCGLCGLGAGYAIGIV). Residues 120-137 (GDAGVRGTAQQPRLFVGM) lie on the Cytoplasmic side of the membrane. A helical membrane pass occupies residues 138–158 (ILILIFSEVLGLYGMIVALIL). Topologically, residues 159–161 (GTS) are lumenal.

The protein belongs to the V-ATPase proteolipid subunit family. V-ATPase is a heteromultimeric enzyme made up of two complexes: the ATP-hydrolytic V1 complex and the proton translocation V0 complex. The V1 complex consists of three catalytic AB heterodimers that form a heterohexamer, three peripheral stalks each consisting of EG heterodimers, one central rotor including subunits D and F, and the regulatory subunits C and H. The proton translocation complex V0 consists of the proton transport subunit a, a ring of proteolipid subunits c9c'', rotary subunit d, subunits e and f, and the accessory subunits vah-19/Ac45 and vah-20/PRR. In terms of tissue distribution, expressed in the H-shaped excretory cell, rectum, and a pair of cells posterior to the anus.

It is found in the membrane. In terms of biological role, proton-conducting pore forming subunit of the V0 complex of vacuolar(H+)-ATPase (V-ATPase), a multisubunit enzyme composed of a peripheral complex (V1) that hydrolyzes ATP and a membrane integral complex (V0) that translocates protons. V-ATPase is responsible for acidifying and maintaining the pH of intracellular compartments and in some cell types, is targeted to the plasma membrane, where it is responsible for acidifying the extracellular environment. Involved in necrotic cell death. Required along with other vacuolar ATPase components for the removal of protein aggregates which form in immature oocytes in the distal gonad. This removal occurs as the oocytes mature and move to the proximal gonad, is triggered by the introduction of sperm through mating and occurs before fertilization. The introduction of sperm triggers V-ATPase accumulation in proximal oocytes and induces lysosomal acidification which leads to engulfing of protein aggregates by lysosomes and subsequent clearance of the aggregates. Lysosomal acidification also leads to changes in mitochondrial morphology and function. Mitochondria in distal immature oocytes are fragmented, produce high levels of reactive oxygen species (ROS) and have high membrane potential, indicative of metabolic inactivity. In contrast, mitochondria in proximal mature oocytes are tubular with lower ROS levels and membrane potential, indicative of an active metabolic state required for aggregate mobilization before clearance. The sequence is that of V-type proton ATPase 16 kDa proteolipid subunit c 2 from Caenorhabditis elegans.